Consider the following 240-residue polypeptide: 4-hydroxy-tetrahydrodipicolinate reductase (240 aa).

Residues A79–T81 and S103–M106 contribute to the NAD(+) site. The active-site Proton donor/acceptor is H135. Residue H136 participates in (S)-2,3,4,5-tetrahydrodipicolinate binding. The active-site Proton donor is the K139. (S)-2,3,4,5-tetrahydrodipicolinate is bound at residue G145–T146.

The protein belongs to the DapB family.

It is found in the cytoplasm. The catalysed reaction is (S)-2,3,4,5-tetrahydrodipicolinate + NAD(+) + H2O = (2S,4S)-4-hydroxy-2,3,4,5-tetrahydrodipicolinate + NADH + H(+). The enzyme catalyses (S)-2,3,4,5-tetrahydrodipicolinate + NADP(+) + H2O = (2S,4S)-4-hydroxy-2,3,4,5-tetrahydrodipicolinate + NADPH + H(+). It functions in the pathway amino-acid biosynthesis; L-lysine biosynthesis via DAP pathway; (S)-tetrahydrodipicolinate from L-aspartate: step 4/4. In terms of biological role, catalyzes the conversion of 4-hydroxy-tetrahydrodipicolinate (HTPA) to tetrahydrodipicolinate. This is 4-hydroxy-tetrahydrodipicolinate reductase from Staphylococcus epidermidis (strain ATCC 12228 / FDA PCI 1200).